A 776-amino-acid polypeptide reads, in one-letter code: Probable exo-1,4-beta-xylosidase bxlB (776 aa).

Residues 1–23 (MVHLSPLLRPLAAFSFFTSLAST) form the signal peptide. Residues asparagine 65 and asparagine 105 are each glycosylated (N-linked (GlcNAc...) asparagine). Residue aspartate 291 is part of the active site. Asparagine 343, asparagine 410, asparagine 421, asparagine 462, asparagine 623, and asparagine 766 each carry an N-linked (GlcNAc...) asparagine glycan.

It belongs to the glycosyl hydrolase 3 family.

The protein localises to the secreted. The enzyme catalyses Hydrolysis of (1-&gt;4)-beta-D-xylans, to remove successive D-xylose residues from the non-reducing termini.. It functions in the pathway glycan degradation; xylan degradation. Xylan 1,4-beta-xylosidase involved in the hydrolysis of xylan, a major structural heterogeneous polysaccharide found in plant biomass representing the second most abundant polysaccharide in the biosphere, after cellulose. This Aspergillus flavus (strain ATCC 200026 / FGSC A1120 / IAM 13836 / NRRL 3357 / JCM 12722 / SRRC 167) protein is Probable exo-1,4-beta-xylosidase bxlB (bxlB).